Consider the following 878-residue polypeptide: Phosphoenolpyruvate carboxylase (878 aa).

Residues His-140 and Lys-545 contribute to the active site.

Belongs to the PEPCase type 1 family. The cofactor is Mg(2+).

The catalysed reaction is oxaloacetate + phosphate = phosphoenolpyruvate + hydrogencarbonate. Its function is as follows. Forms oxaloacetate, a four-carbon dicarboxylic acid source for the tricarboxylic acid cycle. This is Phosphoenolpyruvate carboxylase from Pseudomonas syringae pv. syringae (strain B728a).